The following is a 680-amino-acid chain: GTPase Obg (680 aa).

Positions 2 to 160 (DQFIDVVSFE…LNIRLEVKLI (159 aa)) constitute an Obg domain. One can recognise an OBG-type G domain in the interval 161 to 336 (ADIGLVGMPN…LDGDMLDKVT (176 aa)). GTP is bound by residues 167–174 (GMPNTGKS), 192–196 (FTTLT), 214–217 (DIPG), 281–284 (NKTD), and 317–319 (PEI). Residues S174 and T194 each contribute to the Mg(2+) site. The radical SAM domain stretch occupies residues 371–680 (TKRVFGPVVS…NGVLSYAVNI (310 aa)). The region spanning 383-613 (LGNSLGIDVI…IEIDVPSVSD (231 aa)) is the Radical SAM core domain. Positions 397, 401, and 404 each coordinate [4Fe-4S] cluster.

The protein belongs to the TRAFAC class OBG-HflX-like GTPase superfamily. OBG GTPase family. Monomer. It depends on Mg(2+) as a cofactor. The cofactor is [4Fe-4S] cluster.

It localises to the cytoplasm. Its function is as follows. An essential GTPase which binds GTP, GDP and possibly (p)ppGpp with moderate affinity, with high nucleotide exchange rates and a fairly low GTP hydrolysis rate. Plays a role in control of the cell cycle, stress response, ribosome biogenesis and in those bacteria that undergo differentiation, in morphogenesis control. This is GTPase Obg from Brachyspira hyodysenteriae (strain ATCC 49526 / WA1).